The sequence spans 388 residues: Succinate--CoA ligase [ADP-forming] subunit beta (388 aa).

The 236-residue stretch at 9–244 (KALFAEYGLP…PSQDDAREAH (236 aa)) folds into the ATP-grasp domain. ATP is bound by residues lysine 46, 53–55 (GRG), glutamate 99, threonine 102, and glutamate 107. Residues asparagine 199 and aspartate 213 each coordinate Mg(2+). Substrate is bound by residues asparagine 264 and 321–323 (GIV).

It belongs to the succinate/malate CoA ligase beta subunit family. As to quaternary structure, heterotetramer of two alpha and two beta subunits. Requires Mg(2+) as cofactor.

The catalysed reaction is succinate + ATP + CoA = succinyl-CoA + ADP + phosphate. It catalyses the reaction GTP + succinate + CoA = succinyl-CoA + GDP + phosphate. The protein operates within carbohydrate metabolism; tricarboxylic acid cycle; succinate from succinyl-CoA (ligase route): step 1/1. Its function is as follows. Succinyl-CoA synthetase functions in the citric acid cycle (TCA), coupling the hydrolysis of succinyl-CoA to the synthesis of either ATP or GTP and thus represents the only step of substrate-level phosphorylation in the TCA. The beta subunit provides nucleotide specificity of the enzyme and binds the substrate succinate, while the binding sites for coenzyme A and phosphate are found in the alpha subunit. This Shewanella halifaxensis (strain HAW-EB4) protein is Succinate--CoA ligase [ADP-forming] subunit beta.